Here is a 197-residue protein sequence, read N- to C-terminus: RILP-like protein 2 (197 aa).

A disordered region spans residues 1-24 (MEDHPVREEEDGEEDEGALAKSPL). Over residues 8–17 (EEEDGEEDEG) the composition is skewed to acidic residues. Positions 14-96 (EDEGALAKSP…KQEVEGLRKA (83 aa)) constitute an RH1 domain. Positions 69-153 (VNEGSLAVEE…VQEELQCYRS (85 aa)) form a coiled coil. In terms of domain architecture, RH2 spans 119–184 (RPRFTLQELR…GNGEKEERTI (66 aa)).

This sequence belongs to the RILPL family. In terms of assembly, homodimer. Interacts with RAC1. Interacts (via N-terminus) with MYO5A, the interaction is required for its role in dendrite formation. Interacts with RAB8A; interaction is dependent on the phosphorylation of RAB8A on 'Thr-72'. Interacts with RAB10 and RAB12; interaction is dependent on the phosphorylation of 'Thr-73' on RAB10 and 'Ser-105' on RAB12.

The protein resides in the cytoplasm. It localises to the cytosol. It is found in the cytoskeleton. Its subcellular location is the microtubule organizing center. The protein localises to the centrosome. The protein resides in the cell projection. It localises to the cilium. In terms of biological role, involved in cell shape and neuronal morphogenesis, positively regulating the establishment and maintenance of dendritic spines. Plays a role in cellular protein transport, including protein transport away from primary cilia. May function via activation of RAC1 and PAK1. This is RILP-like protein 2 (Rilpl2) from Mus musculus (Mouse).